We begin with the raw amino-acid sequence, 426 residues long: Dihydroorotase (426 aa).

2 residues coordinate Zn(2+): histidine 62 and histidine 64. Substrate contacts are provided by residues 64-66 and asparagine 96; that span reads HLR. Zn(2+) is bound by residues aspartate 154, histidine 181, histidine 234, and aspartate 307. The active site involves aspartate 307. Residue histidine 311 coordinates substrate.

This sequence belongs to the metallo-dependent hydrolases superfamily. DHOase family. Class I DHOase subfamily. The cofactor is Zn(2+).

The enzyme catalyses (S)-dihydroorotate + H2O = N-carbamoyl-L-aspartate + H(+). Its pathway is pyrimidine metabolism; UMP biosynthesis via de novo pathway; (S)-dihydroorotate from bicarbonate: step 3/3. Functionally, catalyzes the reversible cyclization of carbamoyl aspartate to dihydroorotate. The polypeptide is Dihydroorotase (Syntrophus aciditrophicus (strain SB)).